A 60-amino-acid chain; its full sequence is Large ribosomal subunit protein bL32 (60 aa).

A disordered region spans residues 1-60; the sequence is MAVQQVKKSRSKRDIRRSHDSLTNPTLSTDKSTGELHLRHHVSPNGFYKGRKVVDTKSED. Basic residues predominate over residues 7–16; the sequence is KKSRSKRDIR. The segment covering 22–31 has biased composition (polar residues); the sequence is LTNPTLSTDK.

This sequence belongs to the bacterial ribosomal protein bL32 family.

The sequence is that of Large ribosomal subunit protein bL32 from Francisella tularensis subsp. tularensis (strain SCHU S4 / Schu 4).